Reading from the N-terminus, the 293-residue chain is Protoheme IX farnesyltransferase (293 aa).

9 helical membrane passes run 9–29 (LIKP…FLLA), 38–58 (YIIL…SCVL), 86–106 (FVKN…LFLG), 111–131 (LLTI…YSLW), 137–157 (IYST…GYCT), 167–187 (WLLF…ITIF), 211–231 (IHMI…TVLG), 234–254 (SYTF…TGWY), and 271–291 (ILSI…SIFI).

Belongs to the UbiA prenyltransferase family. Protoheme IX farnesyltransferase subfamily.

It localises to the cell inner membrane. The enzyme catalyses heme b + (2E,6E)-farnesyl diphosphate + H2O = Fe(II)-heme o + diphosphate. It participates in porphyrin-containing compound metabolism; heme O biosynthesis; heme O from protoheme: step 1/1. Converts heme B (protoheme IX) to heme O by substitution of the vinyl group on carbon 2 of heme B porphyrin ring with a hydroxyethyl farnesyl side group. The chain is Protoheme IX farnesyltransferase from Blochmanniella floridana.